Reading from the N-terminus, the 406-residue chain is Probable endo-xylogalacturonan hydrolase A (406 aa).

An N-terminal signal peptide occupies residues 1-18 (MLYPRNLALFSLLSLSSA). 4 PbH1 repeats span residues 183 to 213 (TQHV…DIGA), 214 to 235 (STHV…AFKP), 237 to 257 (SNYV…SVGS), and 299 to 320 (VKNV…QIES). Residue D228 is the Proton donor of the active site. H251 is an active-site residue. N-linked (GlcNAc...) asparagine glycosylation is present at N301.

It belongs to the glycosyl hydrolase 28 family.

The protein resides in the secreted. Functionally, pectinolytic enzyme involved in the degradation of xylogalacturonan (xga), a galacturonan backbone heavily substituted with xylose, and which is one important component of the hairy regions of pectin. Activity requires a galacturonic acid backbone substituted with xylose. This is Probable endo-xylogalacturonan hydrolase A (xghA) from Aspergillus fumigatus (strain ATCC MYA-4609 / CBS 101355 / FGSC A1100 / Af293) (Neosartorya fumigata).